The following is a 448-amino-acid chain: Selenide, water dikinase 2 (448 aa).

An N-acetylalanine modification is found at Ala2. Ser46 is subject to Phosphoserine. Sec60 is an active-site residue. Residue Sec60 is a non-standard amino acid, selenocysteine. Lys63 contributes to the ATP binding site. Positions 85 to 107 (LGRGLVGGQEEASQEAGLPAGAG) are disordered. At Ser97 the chain carries Phosphoserine. ATP is bound by residues 118–120 (GMD), Asp138, Asp161, and 212–215 (GGQT). Residue Asp120 participates in Mg(2+) binding. A Mg(2+)-binding site is contributed by Asp161. Asp316 is a Mg(2+) binding site.

Belongs to the selenophosphate synthase 1 family. Class I subfamily. In terms of assembly, homodimer. Requires Mg(2+) as cofactor. In terms of processing, truncated SEPHS2 proteins produced by failed UGA/Sec decoding are ubiquitinated by the CRL2(KLHDC3) complex, which recognizes the glycine (Gly) at the C-terminus of truncated SEPHS2 proteins.

It carries out the reaction hydrogenselenide + ATP + H2O = selenophosphate + AMP + phosphate + 2 H(+). In terms of biological role, synthesizes selenophosphate from selenide and ATP. This is Selenide, water dikinase 2 (SEPHS2) from Homo sapiens (Human).